The sequence spans 931 residues: MIASIRTTRRLSNYNSVIPPPEPLNTDPDMHPLKRRFEPVLLDRYPPQEATDEITRRGKFPDYVPMFAFPNDIQIVSSDDRPRSTWHGFTMTSDDNSKLYGITIIIWTALNAEVAEEVEKKCEQWRQSHMSEEERELAASLGVRLAGERTHLSQLLAKLPTIPSGSPARERLEDEISTVEEKITLMTDMLRPLRHGAASKIEGLTAGESGLWTPRAYGILGRDAANMSFWKEWLKAIVTPMTDGGVLRIPPSSPSVGRWQPLERYVVNLCTEAFNPLGSKTQVELGVRELRLYARKEADNEIPGSRSIDLYALFRCLSLENIVALFEYAMAESRIIFLSSHTSMLHLACHALANLLYPLKWSSIFIPVLPARLLSALEAPCPYIVGIERRYDRIELPEDDYVLVDLDKDTIDATSQPVRLPRQARRKLMSLLQVAAPHKLRYGVTTGPPPYAMESFPYDAFSTENAALFRSATPKSTLGKWVSQSSSGFGEPDPPNEVLPPLFNAFASAKVDNGKSDRPSTSKSGKTSPQSSVSPVSINFPPMPSTPVSRSDSGFALAATLREKRSGHFGEEKMRRSSSFGIDKHPPYHKPNLPFLNGHQANLSISAISVDSQNSVVGGGSSGGGGYGNGYAPSTYAQSTLAASTIMPSMQIQPVRNTETTVWVEGHCFNWIPKDNTSICNICNDHAEGDGIYKCTGCKIFSHGRCLGHASLVCPEAFHPDRIRAAFVRCLASLLYTYRKYLGRPSKQQKANGQLYAFDMDGFIKSLPHDQHDYATMMRETQCFNEFIHDREMQPANNASIRVFDEIIMAKKARGRSGLSTGLSRLSTIRASHGASTYGGYAPPRGSSNSKIPAWLGDTSDHIWRTASVPLPKGNFPGEYRTVVTRTPARLDRSLMREPRSIQGMPRVEGRGARGLIRKQVPSMLGTTPPT.

Residues 13 to 32 (NYNSVIPPPEPLNTDPDMHP) are disordered. A uDENN domain is found at 19-277 (PPPEPLNTDP…NLCTEAFNPL (259 aa)). In terms of domain architecture, cDENN spans 301 to 433 (EIPGSRSIDL…ARRKLMSLLQ (133 aa)). Positions 435–799 (AAPHKLRYGV…DREMQPANNA (365 aa)) constitute a dDENN domain. 2 disordered regions span residues 478-552 (LGKW…SRSD) and 566-586 (SGHFGEEKMRRSSSFGIDKHP). The segment covering 521–537 (TSKSGKTSPQSSVSPVS) has biased composition (polar residues). Basic and acidic residues predominate over residues 566–575 (SGHFGEEKMR). The Phorbol-ester/DAG-type zinc-finger motif lies at 666–714 (GHCFNWIPKDNTSICNICNDHAEGDGIYKCTGCKIFSHGRCLGHASLVC).

This sequence belongs to the EPD1 elicitor family.

It localises to the secreted. The protein localises to the host cell. Functionally, acts as an elicitor that triggers cell death and defense responses in the host plants. This chain is Elicitor of plant defense protein 1, found in Fusarium odoratissimum (strain NRRL 54006).